A 404-amino-acid polypeptide reads, in one-letter code: Probable protein phosphatase 1N (404 aa).

Positions 59–319 (RFGASAVQGW…DNMTCMVVCF (261 aa)) constitute a PPM-type phosphatase domain. Residues aspartate 96, glycine 97, aspartate 267, and aspartate 310 each coordinate Mn(2+).

The protein belongs to the PP2C family. Mg(2+) serves as cofactor. Mn(2+) is required as a cofactor.

The enzyme catalyses O-phospho-L-seryl-[protein] + H2O = L-seryl-[protein] + phosphate. The catalysed reaction is O-phospho-L-threonyl-[protein] + H2O = L-threonyl-[protein] + phosphate. This is Probable protein phosphatase 1N (Ppm1n) from Mus musculus (Mouse).